A 161-amino-acid polypeptide reads, in one-letter code: uncharacterized protein (161 aa).

This is an uncharacterized protein from Escherichia coli (strain K12).